We begin with the raw amino-acid sequence, 620 residues long: Rhamnogalacturonan endolyase YesW (620 aa).

A signal peptide spans Met-1–Gly-37. Residues Leu-133 to Asn-152 are disordered. Residue Asn-152 coordinates substrate. Asp-153, Asp-158, Asp-160, Asp-162, Gln-164, and Glu-166 together coordinate Ca(2+). Asp-172 lines the substrate pocket. The a carbohydrate site is built by Asp-187 and Lys-207. Residues Asp-222, Asp-224, Asp-226, Lys-228, and Glu-230 each coordinate Ca(2+). Residues Gly-238 and Arg-255 each contribute to the a carbohydrate site. 16 residues coordinate Ca(2+): His-363, Asp-369, Asp-371, Asp-373, Lys-375, Glu-377, Asp-386, His-387, His-399, Asp-401, Asp-407, Asp-409, Arg-412, Gly-414, Glu-416, and Glu-422. Residue Arg-452 participates in substrate binding. Asp-457, Asp-459, Tyr-462, Gly-464, Glu-466, Asp-496, Asp-498, Leu-500, and Glu-502 together coordinate Ca(2+). Asn-532–Thr-534 is a binding site for substrate. Positions 543, 545, 547, 549, 551, 592, and 594 each coordinate Ca(2+). Tyr-595 lines the substrate pocket. Residue Asn-596 participates in Ca(2+) binding.

This sequence belongs to the polysaccharide lyase 11 family. Monomer. It depends on Ca(2+) as a cofactor. Mn(2+) is required as a cofactor.

It localises to the secreted. The catalysed reaction is Endotype eliminative cleavage of L-alpha-rhamnopyranosyl-(1-&gt;4)-alpha-D-galactopyranosyluronic acid bonds of rhamnogalacturonan I domains in ramified hairy regions of pectin leaving L-rhamnopyranose at the reducing end and 4-deoxy-4,5-unsaturated D-galactopyranosyluronic acid at the non-reducing end.. Pectinolytic enzyme that degrades type I rhamnogalacturonan from plant cell walls and releases oligosaccharide products. Degrades rhamnogalacturonan, polygalacturonic acid, pectic acid and pectin. The polypeptide is Rhamnogalacturonan endolyase YesW (yesW) (Bacillus subtilis (strain 168)).